The chain runs to 586 residues: 2-succinyl-5-enolpyruvyl-6-hydroxy-3-cyclohexene-1-carboxylate synthase (586 aa).

The protein belongs to the TPP enzyme family. MenD subfamily. Homodimer. Requires Mg(2+) as cofactor. Mn(2+) serves as cofactor. The cofactor is thiamine diphosphate.

The catalysed reaction is isochorismate + 2-oxoglutarate + H(+) = 5-enolpyruvoyl-6-hydroxy-2-succinyl-cyclohex-3-ene-1-carboxylate + CO2. Its pathway is quinol/quinone metabolism; 1,4-dihydroxy-2-naphthoate biosynthesis; 1,4-dihydroxy-2-naphthoate from chorismate: step 2/7. It functions in the pathway quinol/quinone metabolism; menaquinone biosynthesis. Its function is as follows. Catalyzes the thiamine diphosphate-dependent decarboxylation of 2-oxoglutarate and the subsequent addition of the resulting succinic semialdehyde-thiamine pyrophosphate anion to isochorismate to yield 2-succinyl-5-enolpyruvyl-6-hydroxy-3-cyclohexene-1-carboxylate (SEPHCHC). The protein is 2-succinyl-5-enolpyruvyl-6-hydroxy-3-cyclohexene-1-carboxylate synthase of Geobacillus thermodenitrificans (strain NG80-2).